The chain runs to 108 residues: Vacuolar ATPase assembly integral membrane protein VMA21 (108 aa).

Over 1 to 34 (MASRRSAAAKKEDFSFEAAATQSAHEAQEGFPSS) the chain is Cytoplasmic. A helical membrane pass occupies residues 35–55 (VIIKLVLVTVAMICAPLGTYF). Residues 56–68 (GTLNTICGGDSSY) lie on the Lumenal side of the membrane. A helical membrane pass occupies residues 69-89 (AGALAAISVNVVLIIYLIIAA). Residues 90–108 (REDTGESEEERKGKEGKEE) are Cytoplasmic-facing.

It belongs to the VMA21 family.

Its subcellular location is the endoplasmic reticulum membrane. The protein resides in the endoplasmic reticulum-Golgi intermediate compartment membrane. The protein localises to the cytoplasmic vesicle. It is found in the COPII-coated vesicle membrane. Required for the assembly of the V0 complex of the vacuolar ATPase (V-ATPase) in the endoplasmic reticulum. This chain is Vacuolar ATPase assembly integral membrane protein VMA21, found in Ajellomyces capsulatus (strain NAm1 / WU24) (Darling's disease fungus).